Consider the following 892-residue polypeptide: Putative leucine-rich repeat receptor-like serine/threonine-protein kinase At2g04300 (892 aa).

The signal sequence occupies residues 1–26 (MKTHPQAILLCVLFFITFGLLHVVEA). Residues 27 to 523 (GNQEGFISLD…GAKKKNVVVL (497 aa)) lie on the Extracellular side of the membrane. N-linked (GlcNAc...) asparagine glycans are attached at residues Asn-99, Asn-186, Asn-241, Asn-267, and Asn-294. 4 LRR repeats span residues 375–396 (IKNI…PCVP), 399–422 (FMWD…FLNL), 423–444 (SSSH…LQNL), and 447–467 (SNNN…SLLV). Residues Asn-407, Asn-421, Asn-437, Asn-450, and Asn-469 are each glycosylated (N-linked (GlcNAc...) asparagine). A helical membrane pass occupies residues 524 to 544 (VVVSIALVVVLGSALALFLVF). Residues 545-892 (RKRKTPRNEV…FGTEYTPEAR (348 aa)) lie on the Cytoplasmic side of the membrane. The residue at position 573 (Thr-573) is a Phosphothreonine. The Protein kinase domain occupies 582–855 (NNFEKILGKG…QVVIELNECL (274 aa)). ATP contacts are provided by residues 588–596 (LGKGGFGMV) and Lys-610. Residue Tyr-655 is modified to Phosphotyrosine. Catalysis depends on Asp-707, which acts as the Proton acceptor. A phosphothreonine mark is found at Thr-742 and Thr-747. Tyr-755 bears the Phosphotyrosine mark.

The protein belongs to the protein kinase superfamily. Ser/Thr protein kinase family.

The protein localises to the cell membrane. It carries out the reaction L-seryl-[protein] + ATP = O-phospho-L-seryl-[protein] + ADP + H(+). It catalyses the reaction L-threonyl-[protein] + ATP = O-phospho-L-threonyl-[protein] + ADP + H(+). This is Putative leucine-rich repeat receptor-like serine/threonine-protein kinase At2g04300 from Arabidopsis thaliana (Mouse-ear cress).